Reading from the N-terminus, the 414-residue chain is F-box protein At3g26010 (414 aa).

The F-box domain occupies 5-52 (NRTIHLTDAIWTEILARLPLRIIARFKSVSKTWKSTIESVYFRRLFVS).

This is F-box protein At3g26010 from Arabidopsis thaliana (Mouse-ear cress).